The chain runs to 1209 residues: MESAPKTVSLPVSPLGYVYARQKASLQTGTVSLTAARSVDSDLAVLPVIRGLTVEQTFTTNVAVVAGSKTTGLGGTGITLKLTPSHFNPSAFVFYGGSVIGASSNAPNLTRACEAARRRFGFSAFSSPPVENAVETSGEEICASLNLSPETTALYLVVTESFKEMVYVCNTFLHYGGTSTVTIDGQDAMKIPIYPVQLYMPDVNRLASEPFNAKHRSIGDEFVYSRPFFNSDLCRLLHGYVLGPAAVALRVRNLDGVARGAAHLALDENHEGSVLPQDVTFTLFDSTQGNAGKGSGRAQRQGDGSGSKNSASSGIERRLASVMAADTALSVDSIMGAGIYDTELPSVEDWPVLSSGDDTESLEALGAYAARLSGLVGAMVFSANSVLYMTEVDDGGPADGKDGSNPSYHRFYLIAAPYVAGNPQTDKDGRVLPHTADQQAAPINGSNQEFSLDYLALACGFCPQILARLLFYLERCDAGTFGGRNETDALRYLANTLESDVPCGLCNQATRPACAHTTLHRLRQRLPRFGAPVRAPIGIFGTMNSAYSDCDVLGNYASYGALKRPNDNEAPKSIMQDTYRATMERLVNELEQAKLIDKETLAQASPCSAPTSVVHDQASFIGLLSNIKDTIEGAAEQFMRTLVEARDFKIREGLADANHTMSISLDPYSSSFCPVTSFLARRTVFAVLQDLVLSQCHCLFYGQSVEGRNFRNQFQPVLRRRFLDMLNGGFITAKTVTVTVSDSGVLAPDLTRPASEPPTKDYDGDMARVSMEVLRDLRVKNRVLFSNGGANMSEAARARVAGMASAYRRPDKGSNILNGAVGFLVKQYHGVLFPRGHPPGIDTPNPQWFWTLLQRNQMPARLLSKEDIETITAIKRFSDEYSAINFINLTPNNIGELAQFYFANLVLKYCDHSQYFINGLTAIVVGSRRPRDPAAVLAWIDRTINGAADVEPAAQEVLQRLGSNPAAWTGTFTSTNMVRYVMDQRPMVVIGLSISKYNGSAGNNRVFQAGNWNGLNGGKNVCPLMAFDRTRRFVLACPRVGFTCEAGGFGTGVRENTLSEQVRGIVSEGGPMVQTAVFAAVLHALGARTQHLAVDDWIGLVDDEFLAASLDALNATVVDQFGEWSVEAAQELVKNMEAQTTAGAVAAGEGAFDFGACVGDTPQQSTSAFNGGLAMAAAPAGQKRSLPDDILFDMGAPPEKKSGLTFDML.

Residues 290–312 (NAGKGSGRAQRQGDGSGSKNSAS) are disordered. A zinc finger lies at 503 to 516 (CGLCNQATRPACAH). Residues 849 to 850 (FW) carry the Required for filament formation motif. Positions 1182 to 1209 (QKRSLPDDILFDMGAPPEKKSGLTFDML) are required for nuclear localization.

Belongs to the herpesviridae major DNA-binding protein family. As to quaternary structure, homooligomers. Forms double-helical filaments necessary for the formation of replication compartments within the host nucleus. Interacts with the origin-binding protein. Interacts with the helicase primase complex; this interaction stimulates primer synthesis activity of the helicase-primase complex. Interacts with the DNA polymerase. Interacts with the alkaline exonuclease; this interaction increases its nuclease processivity.

It localises to the host nucleus. In terms of biological role, plays several crucial roles in viral infection. Participates in the opening of the viral DNA origin to initiate replication by interacting with the origin-binding protein. May disrupt loops, hairpins and other secondary structures present on ssDNA to reduce and eliminate pausing of viral DNA polymerase at specific sites during elongation. Promotes viral DNA recombination by performing strand-transfer, characterized by the ability to transfer a DNA strand from a linear duplex to a complementary single-stranded DNA circle. Can also catalyze the renaturation of complementary single strands. Additionally, reorganizes the host cell nucleus, leading to the formation of prereplicative sites and replication compartments. This process is driven by the protein which can form double-helical filaments in the absence of DNA. In Equine herpesvirus 1 (strain V592) (EHV-1), this protein is Major DNA-binding protein.